Consider the following 300-residue polypeptide: Eukaryotic translation initiation factor 3 subunit F (300 aa).

Residues 33-169 form the MPN domain; it reads VKVHPVALFS…VQCYVSALLG (137 aa).

It belongs to the eIF-3 subunit F family. Component of the eukaryotic translation initiation factor 3 (eIF-3) complex.

The protein localises to the cytoplasm. Functionally, component of the eukaryotic translation initiation factor 3 (eIF-3) complex, which is involved in protein synthesis of a specialized repertoire of mRNAs and, together with other initiation factors, stimulates binding of mRNA and methionyl-tRNAi to the 40S ribosome. The eIF-3 complex specifically targets and initiates translation of a subset of mRNAs involved in cell proliferation. The protein is Eukaryotic translation initiation factor 3 subunit F of Malassezia globosa (strain ATCC MYA-4612 / CBS 7966) (Dandruff-associated fungus).